A 212-amino-acid chain; its full sequence is HTH-type transcriptional regulatory protein RaaS (212 aa).

The region spanning 6 to 65 (LTAHARIREAAIEQFGRHGFGVGLRAIAEAAGVSAALVIHHFGSKEGLRKACDDFVAEEI) is the HTH tetR-type domain. The segment at residues 28-47 (GLRAIAEAAGVSAALVIHHF) is a DNA-binding region (H-T-H motif).

As to quaternary structure, homodimer. Interacts with long chain acyl-CoA derivatives. Interacts with several drugs such rhodamine 6G, ethidium and safranin O.

With respect to regulation, interaction with long chain acyl-CoA derivatives (oleoyl-CoA and, to lesser extent, stearoyl-CoA) prevents binding to DNA, leading to the expression of the target genes. Long chain acyl-CoA derivatives may serve as biological indicators of the bacterial metabolic state. Regulates the expression of the Rv1217c-Rv1218c multidrug efflux system and its own expression. Acts by binding to promoter regions of Rv1219c and upstream of the Rv1218c gene. Important for survival in prolonged stationary phase and during macrophage infection. May be used to eliminate non-growing mycobacteria. The polypeptide is HTH-type transcriptional regulatory protein RaaS (Mycobacterium tuberculosis (strain ATCC 25618 / H37Rv)).